A 431-amino-acid polypeptide reads, in one-letter code: Nocturnin (431 aa).

The transit peptide at 1–75 directs the protein to the mitochondrion; the sequence is MFHSPRRLCS…SMGTGTSRLY (75 aa). Over residues 20 to 31 the composition is skewed to low complexity; it reads LRRLPAPGLRRP. The disordered stretch occupies residues 20-41; sequence LRRLPAPGLRRPLSPPAAVPRP. Pro residues predominate over residues 32-41; it reads LSPPAAVPRP. E195 is a binding site for Mg(2+). Substrate is bound by residues E195, 219–221, N263, 286–289, and 324–326; these read KPW, HLKA, and DFN. Residues 343–353 form an interaction with PPARG region; sequence NLNSAYKLLSA. H414 contributes to the substrate binding site.

It belongs to the CCR4/nocturin family. As to quaternary structure, interacts with PPARG. Requires Mg(2+) as cofactor. As to expression, adipose tissue. Expression is higher in subcutaneous adipose tissue as compared to visceral adipose tissue.

The protein localises to the cytoplasm. Its subcellular location is the nucleus. The protein resides in the perinuclear region. It localises to the mitochondrion. The enzyme catalyses NADP(+) + H2O = phosphate + NAD(+). The catalysed reaction is NADPH + H2O = phosphate + NADH. In terms of biological role, phosphatase which catalyzes the conversion of NADP(+) to NAD(+) and of NADPH to NADH. Shows a small preference for NADPH over NADP(+). Represses translation and promotes degradation of target mRNA molecules. Plays an important role in post-transcriptional regulation of metabolic genes under circadian control. Exerts a rhythmic post-transcriptional control of genes necessary for metabolic functions including nutrient absorption, glucose/insulin sensitivity, lipid metabolism, adipogenesis, inflammation and osteogenesis. Plays an important role in favoring adipogenesis over osteoblastogenesis and acts as a key regulator of the adipogenesis/osteogenesis balance. Promotes adipogenesis by facilitating PPARG nuclear translocation which activates its transcriptional activity. Regulates circadian expression of NOS2 in the liver and negatively regulates the circadian expression of IGF1 in the bone. Critical for proper development of early embryos. This is Nocturnin from Homo sapiens (Human).